We begin with the raw amino-acid sequence, 424 residues long: Tubulin-specific chaperone cofactor E-like protein (424 aa).

Residues Ser-18 and Ser-41 each carry the phosphoserine modification. 7 LRR repeats span residues Cys-73–Asn-98, Val-99–Gly-123, Ser-124–Leu-147, Leu-150–Cys-172, Cys-173–Val-197, Phe-199–Arg-224, and Phe-226–Ser-250. Residues Ile-262–Phe-303 form the LRRCT domain. A Ubiquitin-like domain is found at Ala-334–Lys-424. A coiled-coil region spans residues His-349–Leu-375.

As to expression, abundantly expressed in testis, but is also present in several tissues at a much lower level.

The protein resides in the cytoplasm. It is found in the cytoskeleton. In terms of biological role, acts as a regulator of tubulin stability. The sequence is that of Tubulin-specific chaperone cofactor E-like protein (TBCEL) from Homo sapiens (Human).